The sequence spans 501 residues: CUGBP Elav-like family member 1 (501 aa).

The segment at 2–196 is binds strongly to URE; sequence NGSLDHPDQP…DTQKDKEQKR (195 aa). 2 consecutive RRM domains span residues 16–99 and 108–188; these read IKMF…PADS and RKLF…FADT. Low complexity-rich tracts occupy residues 274–298 and 312–323; these read PTGS…TPSG and SSPTSSTSSSVN. The interval 274–323 is disordered; it reads PTGSSALTTSSSPLSVLTSSGTPSGQPAQSAWDAYKAGSSPTSSTSSSVN. A binds strongly to URE region spans residues 397-501; the sequence is LLSQQNVSAA…KRSKNDSKPY (105 aa). The RRM 3 domain maps to 416–494; it reads ANLFIYHLPQ…KRLKVQLKRS (79 aa).

Belongs to the CELF/BRUNOL family.

The protein resides in the nucleus. It is found in the cytoplasm. Its function is as follows. RNA-binding protein implicated in the regulation of several post-transcriptional events. May be involved in mRNA translation activation and stability. Involved in the regulation of muscle-specific splicing of alpha actinin pre-mRNAs via the binding to the UR-repeat element (URE) at the branch point of the non-muscle (NM) exon. The protein is CUGBP Elav-like family member 1 (celf1) of Danio rerio (Zebrafish).